Reading from the N-terminus, the 588-residue chain is Proteasome-associated ATPase (588 aa).

Residues 1-10 (MAAHDDDMNR) are compositionally biased toward basic and acidic residues. Positions 1–23 (MAAHDDDMNRGIRPGRGSDDPAG) are disordered. A coiled-coil region spans residues 47 to 94 (RILEERIVELQTNLAGVSAQNERLANTLREARDQIVALKEEVDRLAQP). 276–281 (GCGKTL) contacts ATP. Residues 587–588 (YL) form a docks into pockets in the proteasome alpha-ring region.

It belongs to the AAA ATPase family. In terms of assembly, homohexamer. Assembles into a hexameric ring structure that caps the 20S proteasome core. Strongly interacts with the prokaryotic ubiquitin-like protein Pup through a hydrophobic interface; the interacting region of ARC lies in its N-terminal coiled-coil domain. There is one Pup binding site per ARC hexamer ring. Upon ATP-binding, the C-terminus of ARC interacts with the alpha-rings of the proteasome core, possibly by binding to the intersubunit pockets.

Its pathway is protein degradation; proteasomal Pup-dependent pathway. Functionally, ATPase which is responsible for recognizing, binding, unfolding and translocation of pupylated proteins into the bacterial 20S proteasome core particle. May be essential for opening the gate of the 20S proteasome via an interaction with its C-terminus, thereby allowing substrate entry and access to the site of proteolysis. Thus, the C-termini of the proteasomal ATPase may function like a 'key in a lock' to induce gate opening and therefore regulate proteolysis. The chain is Proteasome-associated ATPase from Streptomyces avermitilis (strain ATCC 31267 / DSM 46492 / JCM 5070 / NBRC 14893 / NCIMB 12804 / NRRL 8165 / MA-4680).